A 596-amino-acid chain; its full sequence is MLEKEDIRSLLKELPSSPGVYRFYSIEKELIYVGKAKSLRKRVANYFTNKKNLDQKTRSMVRKIYHAEYTLVNSEYEALLLENNLIKENKPKYNVLLRDDKTYPFICLSSADFPTLTTTRKIDKKKGEYFGPYTSGRAMHSLVESLRKTFFIRTCDLNLTKQNIDAHKFKVCLEYHIGNCKGPCEGKQEKEDYDVSIIQVRNILKGNFSSVKKYYQEKMLSAAEDMQFEKAQFFKERYNSVLGLEKSSLIVNPDINNLEVYTIVKRLNRASVNFMSILHGSIIKARTIEMKAVLDETEEELLMHALFEIHEEGWDSTKEIICNIELPILSTYCKVSIPQRGDKKKLIDLSLKNAWHTLTRYDDQKKEKPEIRVLKTLQADLSLKELPAHIECFDNSNIQGTNPVAAMVCYKNGKPSKKDYRHFNIKTVEGPNDFASMYEIVYRRYKRMGEEGLPFPTLIIIDGGKGQLSFACQALKDLNIYGQIPIVSIAKNLEELFFPGDNDPLYLDKKSESLKLIQQIRDETHRFAITFHRQKRSKDALLKTEFENLVGIGPGTVKKLLTHFKTVKRIKEASIEQLTPVIGNSKATILFQQLNK.

A GIY-YIG domain is found at 16–95 (SSPGVYRFYS…IKENKPKYNV (80 aa)). A UVR domain is found at 209–244 (SSVKKYYQEKMLSAAEDMQFEKAQFFKERYNSVLGL).

The protein belongs to the UvrC family. As to quaternary structure, interacts with UvrB in an incision complex.

It is found in the cytoplasm. Its function is as follows. The UvrABC repair system catalyzes the recognition and processing of DNA lesions. UvrC both incises the 5' and 3' sides of the lesion. The N-terminal half is responsible for the 3' incision and the C-terminal half is responsible for the 5' incision. The sequence is that of UvrABC system protein C from Cytophaga hutchinsonii (strain ATCC 33406 / DSM 1761 / CIP 103989 / NBRC 15051 / NCIMB 9469 / D465).